Reading from the N-terminus, the 263-residue chain is Small ribosomal subunit protein uS2 (263 aa).

The protein belongs to the universal ribosomal protein uS2 family.

The protein is Small ribosomal subunit protein uS2 of Roseiflexus castenholzii (strain DSM 13941 / HLO8).